The following is a 258-amino-acid chain: Aspartate/glutamate leucyltransferase (258 aa).

Belongs to the R-transferase family. Bpt subfamily.

It is found in the cytoplasm. The enzyme catalyses N-terminal L-glutamyl-[protein] + L-leucyl-tRNA(Leu) = N-terminal L-leucyl-L-glutamyl-[protein] + tRNA(Leu) + H(+). It carries out the reaction N-terminal L-aspartyl-[protein] + L-leucyl-tRNA(Leu) = N-terminal L-leucyl-L-aspartyl-[protein] + tRNA(Leu) + H(+). Functions in the N-end rule pathway of protein degradation where it conjugates Leu from its aminoacyl-tRNA to the N-termini of proteins containing an N-terminal aspartate or glutamate. The sequence is that of Aspartate/glutamate leucyltransferase from Rhodopseudomonas palustris (strain TIE-1).